A 498-amino-acid chain; its full sequence is ATP synthase subunit beta, chloroplastic (498 aa).

172–179 (GGAGVGKT) contributes to the ATP binding site.

The protein belongs to the ATPase alpha/beta chains family. F-type ATPases have 2 components, CF(1) - the catalytic core - and CF(0) - the membrane proton channel. CF(1) has five subunits: alpha(3), beta(3), gamma(1), delta(1), epsilon(1). CF(0) has four main subunits: a(1), b(1), b'(1) and c(9-12).

It is found in the plastid. Its subcellular location is the chloroplast thylakoid membrane. It catalyses the reaction ATP + H2O + 4 H(+)(in) = ADP + phosphate + 5 H(+)(out). Its function is as follows. Produces ATP from ADP in the presence of a proton gradient across the membrane. The catalytic sites are hosted primarily by the beta subunits. The protein is ATP synthase subunit beta, chloroplastic of Panax ginseng (Korean ginseng).